Reading from the N-terminus, the 353-residue chain is MSEPLKPRIDFAEPLKEEPTSAFKAQQTFSEAESRTFAPAAIDERPEDEGVAEAAVDAALRPKRSLWRKMVMGGLALFGASVVGQGVQWTMNAWQTQDWVALGGCAAGALIIGAGVGSVVTEWRRLWRLRQRAHERDEARELLHSHSVGKGRAFCEKLAQQAGIDQSHPALQRWYAAIHETQNDREIVGLYAHLVQPVLDAQARREISRFAAESTLMIAVSSLALVDMAFIAWRNLRLINRIATLYGIELGYYSRLRLFRLVLLNIAFAGASELVREVGMDWMSQDLAARLSTRAAQGIGAGLLTARLGIKAMELCRPLPWIDNDKPRLGDFRRQLIGQLKETLQKSKSSPEK.

Positions 1 to 19 (MSEPLKPRIDFAEPLKEEP) are enriched in basic and acidic residues. Residues 1 to 35 (MSEPLKPRIDFAEPLKEEPTSAFKAQQTFSEAESR) form a disordered region. Helical transmembrane passes span 70–90 (MVMG…VQWT), 100–120 (VALG…GSVV), and 213–233 (ESTL…FIAW).

Belongs to the UPF0283 family.

The protein localises to the cell inner membrane. This is UPF0283 membrane protein YcjF from Salmonella enteritidis PT4 (strain P125109).